The following is a 182-amino-acid chain: uncharacterized protein (182 aa).

This is an uncharacterized protein from Mycobacterium tuberculosis (strain CDC 1551 / Oshkosh).